The chain runs to 259 residues: 3-deoxy-manno-octulosonate cytidylyltransferase (259 aa).

This sequence belongs to the KdsB family.

The protein localises to the cytoplasm. The catalysed reaction is 3-deoxy-alpha-D-manno-oct-2-ulosonate + CTP = CMP-3-deoxy-beta-D-manno-octulosonate + diphosphate. It functions in the pathway nucleotide-sugar biosynthesis; CMP-3-deoxy-D-manno-octulosonate biosynthesis; CMP-3-deoxy-D-manno-octulosonate from 3-deoxy-D-manno-octulosonate and CTP: step 1/1. Its pathway is bacterial outer membrane biogenesis; lipopolysaccharide biosynthesis. Its function is as follows. Activates KDO (a required 8-carbon sugar) for incorporation into bacterial lipopolysaccharide in Gram-negative bacteria. The protein is 3-deoxy-manno-octulosonate cytidylyltransferase of Alkalilimnicola ehrlichii (strain ATCC BAA-1101 / DSM 17681 / MLHE-1).